The sequence spans 222 residues: Ribosomal RNA small subunit methyltransferase G (222 aa).

S-adenosyl-L-methionine is bound by residues G80, L85, 131 to 132 (VE), and R148.

It belongs to the methyltransferase superfamily. RNA methyltransferase RsmG family.

Its subcellular location is the cytoplasm. The enzyme catalyses guanosine(527) in 16S rRNA + S-adenosyl-L-methionine = N(7)-methylguanosine(527) in 16S rRNA + S-adenosyl-L-homocysteine. Specifically methylates the N7 position of guanine in position 527 of 16S rRNA. This is Ribosomal RNA small subunit methyltransferase G from Polynucleobacter asymbioticus (strain DSM 18221 / CIP 109841 / QLW-P1DMWA-1) (Polynucleobacter necessarius subsp. asymbioticus).